Here is a 475-residue protein sequence, read N- to C-terminus: Putative response regulator NtrX-like (475 aa).

In terms of domain architecture, Response regulatory spans 5 to 121 (DVLILDDEES…KLIILLKRAC (117 aa)). Asp54 is modified (4-aspartylphosphate). Residues 143 to 369 (LVGGCSVTLK…LRNVVEWTLI (227 aa)) enclose the Sigma-54 factor interaction domain. ATP is bound by residues 171–178 (GKVGSGKE) and 232–241 (ANNGTLYIDE).

Functionally, member of the two-component regulatory system RT0550/RT0603. This chain is Putative response regulator NtrX-like, found in Rickettsia typhi (strain ATCC VR-144 / Wilmington).